The following is a 350-amino-acid chain: Glyceraldehyde-3-phosphate dehydrogenase (350 aa).

NAD(+) is bound by residues 10-11 (RI), D36, R82, and S125. D-glyceraldehyde 3-phosphate contacts are provided by residues 161–163 (SCT), T193, 222–223 (TG), and R245. C162 serves as the catalytic Nucleophile. N331 contributes to the NAD(+) binding site.

Belongs to the glyceraldehyde-3-phosphate dehydrogenase family. Homotetramer.

The protein localises to the cytoplasm. It carries out the reaction D-glyceraldehyde 3-phosphate + phosphate + NAD(+) = (2R)-3-phospho-glyceroyl phosphate + NADH + H(+). Its pathway is carbohydrate degradation; glycolysis; pyruvate from D-glyceraldehyde 3-phosphate: step 1/5. In terms of biological role, catalyzes the oxidative phosphorylation of glyceraldehyde 3-phosphate (G3P) to 1,3-bisphosphoglycerate (BPG) using the cofactor NAD. The first reaction step involves the formation of a hemiacetal intermediate between G3P and a cysteine residue, and this hemiacetal intermediate is then oxidized to a thioester, with concomitant reduction of NAD to NADH. The reduced NADH is then exchanged with the second NAD, and the thioester is attacked by a nucleophilic inorganic phosphate to produce BPG. This is Glyceraldehyde-3-phosphate dehydrogenase (gap) from Treponema pallidum (strain Nichols).